A 432-amino-acid polypeptide reads, in one-letter code: Enolase (432 aa).

Q163 serves as a coordination point for (2R)-2-phosphoglycerate. Catalysis depends on E205, which acts as the Proton donor. Mg(2+) is bound by residues D242, E287, and D314. (2R)-2-phosphoglycerate-binding residues include K339, R368, S369, and K390. The Proton acceptor role is filled by K339.

It belongs to the enolase family. It depends on Mg(2+) as a cofactor.

It localises to the cytoplasm. The protein localises to the secreted. The protein resides in the cell surface. It catalyses the reaction (2R)-2-phosphoglycerate = phosphoenolpyruvate + H2O. It functions in the pathway carbohydrate degradation; glycolysis; pyruvate from D-glyceraldehyde 3-phosphate: step 4/5. Catalyzes the reversible conversion of 2-phosphoglycerate (2-PG) into phosphoenolpyruvate (PEP). It is essential for the degradation of carbohydrates via glycolysis. The polypeptide is Enolase (Myxococcus xanthus (strain DK1622)).